We begin with the raw amino-acid sequence, 499 residues long: MARKIKIFDTTLRDGEQTPGVSLTVEEKIEIAKQLARLNVDVIEAGFPISSPGEFEAVKRIAREVRGPTIAALARAVKKDIDAAGEALKDAESKRIHTFIATSLIHMKYKLRKTPEEVKKMAVEAVEYATKYTDDIEFSAEDATRSDWNFLVEVYEAVIDAGATTINVPDTVGYTTPEEFYELIRYLKRNITNLNGVTISVHCHNDLGLAVANSLSAVRAGADQVEVTVNGIGERAGNAALEEVVVALDVRKDFYNVETGINLGEIARTSKLVARLTGIEVPPNKAVVGANAFAHESGIHQDGVLKERTTYEIIDPRKLGFSGSKIVLGKHSGRHAFRKKLEEMGYRLSEEEINRLFAKFKEIADRKKGLTELDIEAIVQEELGKGKGKYSVEVLHVISGKISTATVRVQGDGIDKIESAWSSNGPIDALFAAINRALGIDCKLKEYRVSSVTSGRDALGEVLVRVEYNGEIYVGRGLSTDIIEASAQAYLSALNRIRR.

The Pyruvate carboxyltransferase domain occupies 5–267 (IKIFDTTLRD…ETGINLGEIA (263 aa)). Asp14, His202, His204, and Asn238 together coordinate Mn(2+). Residues 391-499 (SVEVLHVISG…YLSALNRIRR (109 aa)) form a regulatory domain region.

It belongs to the alpha-IPM synthase/homocitrate synthase family. LeuA type 1 subfamily. Requires Mn(2+) as cofactor.

It localises to the cytoplasm. The enzyme catalyses 3-methyl-2-oxobutanoate + acetyl-CoA + H2O = (2S)-2-isopropylmalate + CoA + H(+). Its pathway is amino-acid biosynthesis; L-leucine biosynthesis; L-leucine from 3-methyl-2-oxobutanoate: step 1/4. In terms of biological role, catalyzes the condensation of the acetyl group of acetyl-CoA with 3-methyl-2-oxobutanoate (2-ketoisovalerate) to form 3-carboxy-3-hydroxy-4-methylpentanoate (2-isopropylmalate). The protein is 2-isopropylmalate synthase of Pyrococcus furiosus (strain ATCC 43587 / DSM 3638 / JCM 8422 / Vc1).